The sequence spans 353 residues: tRNA-cytidine(32) 2-sulfurtransferase (353 aa).

Positions 49–54 (SGGKDS) match the PP-loop motif motif. [4Fe-4S] cluster-binding residues include Cys-124, Cys-127, and Cys-215.

Belongs to the TtcA family. As to quaternary structure, homodimer. It depends on Mg(2+) as a cofactor. Requires [4Fe-4S] cluster as cofactor.

Its subcellular location is the cytoplasm. It catalyses the reaction cytidine(32) in tRNA + S-sulfanyl-L-cysteinyl-[cysteine desulfurase] + AH2 + ATP = 2-thiocytidine(32) in tRNA + L-cysteinyl-[cysteine desulfurase] + A + AMP + diphosphate + H(+). It functions in the pathway tRNA modification. Its function is as follows. Catalyzes the ATP-dependent 2-thiolation of cytidine in position 32 of tRNA, to form 2-thiocytidine (s(2)C32). The sulfur atoms are provided by the cysteine/cysteine desulfurase (IscS) system. This is tRNA-cytidine(32) 2-sulfurtransferase from Sodalis glossinidius (strain morsitans).